The following is a 261-amino-acid chain: tRNA U34 carboxymethyltransferase (261 aa).

Carboxy-S-adenosyl-L-methionine is bound by residues Lys-25, Trp-39, Lys-44, Gly-63, 114–115, Tyr-135, and Arg-250; that span reads VE.

Belongs to the class I-like SAM-binding methyltransferase superfamily. CmoB family. In terms of assembly, homotetramer.

The enzyme catalyses carboxy-S-adenosyl-L-methionine + 5-hydroxyuridine(34) in tRNA = 5-carboxymethoxyuridine(34) in tRNA + S-adenosyl-L-homocysteine + H(+). Functionally, catalyzes carboxymethyl transfer from carboxy-S-adenosyl-L-methionine (Cx-SAM) to 5-hydroxyuridine (ho5U) to form 5-carboxymethoxyuridine (cmo5U) at position 34 in tRNAs. This Helicobacter pylori (strain G27) protein is tRNA U34 carboxymethyltransferase.